The following is a 49-amino-acid chain: Large ribosomal subunit protein bL33A (49 aa).

It belongs to the bacterial ribosomal protein bL33 family.

This chain is Large ribosomal subunit protein bL33A, found in Latilactobacillus sakei subsp. sakei (strain 23K) (Lactobacillus sakei subsp. sakei).